Consider the following 97-residue polypeptide: Cysteine-rich and transmembrane domain-containing protein 1 (97 aa).

Over residues 1–40 the composition is skewed to pro residues; it reads MNQENPPPYPGPGPTAPYPPYPPQPMGPGPMGGPYPPPQG. A disordered region spans residues 1 to 61; that stretch reads MNQENPPPYP…QGGPQEPPKT (61 aa). Over residues 41–50 the composition is skewed to low complexity; sequence YPYQGYPQYG. The helical transmembrane segment at 74-91 threads the bilayer; that stretch reads LGPSTCLTACWTALCCCC.

This sequence belongs to the CYSTM1 family.

The protein localises to the membrane. This is Cysteine-rich and transmembrane domain-containing protein 1 (CYSTM1) from Homo sapiens (Human).